The following is a 436-amino-acid chain: Histone acetyltransferase type B subunit 2 (436 aa).

WD repeat units lie at residues 136–176 (DHKG…SLPT), 187–227 (GHTK…KGNK), 237–277 (HHSS…TTRA), 284–324 (QHRD…TKLH), and 328–368 (SHTD…EEQT). The interval 370–374 (EDAQD) is interaction with the histone H4 N-terminus. A WD 6 repeat occupies 385-425 (GHTNRISDFSWNLNDPWVLCSAAEDNLLQVWKVADAIVGKD).

It belongs to the WD repeat RBAP46/RBAP48/MSI1 family. Component of the HAT-B complex composed of at least hat1 and hat2. The HAT-B complex binds to histone H4 tail.

It localises to the cytoplasm. The protein localises to the nucleus. In terms of biological role, regulatory subunit of the histone acetylase B (HAT-B) complex. The complex acetylates 'Lys-12' of histone H4 which is required for telomeric silencing. The sequence is that of Histone acetyltransferase type B subunit 2 (hat2) from Aspergillus fumigatus (strain ATCC MYA-4609 / CBS 101355 / FGSC A1100 / Af293) (Neosartorya fumigata).